The primary structure comprises 433 residues: 23S rRNA (uracil(1939)-C(5))-methyltransferase RlmD (433 aa).

One can recognise a TRAM domain in the interval 10–68 (RTTTRQIITVSVNDLDSFGQGVARHNGKTLFIPGLLPQENAEVAVTEDKKQYARAKVVR). [4Fe-4S] cluster contacts are provided by cysteine 81, cysteine 87, cysteine 90, and cysteine 162. 6 residues coordinate S-adenosyl-L-methionine: glutamine 265, phenylalanine 294, asparagine 299, glutamate 315, asparagine 342, and aspartate 363. The active-site Nucleophile is cysteine 389.

The protein belongs to the class I-like SAM-binding methyltransferase superfamily. RNA M5U methyltransferase family. RlmD subfamily.

The catalysed reaction is uridine(1939) in 23S rRNA + S-adenosyl-L-methionine = 5-methyluridine(1939) in 23S rRNA + S-adenosyl-L-homocysteine + H(+). Its function is as follows. Catalyzes the formation of 5-methyl-uridine at position 1939 (m5U1939) in 23S rRNA. The polypeptide is 23S rRNA (uracil(1939)-C(5))-methyltransferase RlmD (Shigella flexneri serotype 5b (strain 8401)).